The primary structure comprises 234 residues: Probable transcriptional regulatory protein PFL_3960 (234 aa).

The protein belongs to the TACO1 family.

It is found in the cytoplasm. In Pseudomonas fluorescens (strain ATCC BAA-477 / NRRL B-23932 / Pf-5), this protein is Probable transcriptional regulatory protein PFL_3960.